Here is a 919-residue protein sequence, read N- to C-terminus: MLX-interacting protein (919 aa).

The tract at residues 1–72 (MAADVFMCSP…AGPGREEPPR (72 aa)) is disordered. Alanine 2 carries the post-translational modification N-acetylalanine. Serine 9, serine 27, serine 33, and serine 39 each carry phosphoserine. Residues 27-37 (SEDDDDSDTDE) show a composition bias toward acidic residues. The segment covering 44 to 56 (SGAATPARAHASA) has biased composition (low complexity). The segment at 73 to 327 (RQQIIHSGHF…PLQPNLDFMD (255 aa)) is required for cytoplasmic localization. The interval 322-445 (NLDFMDTFEP…LLSPSPAPPP (124 aa)) is transactivation domain. Disordered regions lie at residues 542–562 (KPVSLTGGRPKQPHKIVPAPK) and 633–712 (DLGH…SDPK). Serine 669 bears the Phosphoserine mark. The span at 670–685 (PQVTVTGPSRDCPNSG) shows a compositional bias: polar residues. The segment covering 686–706 (QASPCASEQSPSPQSPQNNCS) has biased composition (low complexity). The 51-residue stretch at 719–769 (NRQMKHISAEQKRRFNIKMCFDMLNSLISNNSKLTSHAITLQKTVEYITKL) folds into the bHLH domain. The leucine-zipper stretch occupies residues 769-790 (LQQERGQMQEEARRLREEIEEL). Residues 832–881 (WKFWIFSIIIKPLFESFKGMVSTSSLEELHRTALSWLDQHCSLPILRPMV) form a mediates heterotypic interactions between MLXIP and MLX and is required for cytoplasmic localization region.

Efficient DNA binding requires dimerization with another bHLH protein. Binds DNA as a homodimer or a heterodimer with MLX. Widely expressed in adult tissues. Most abundant in skeletal muscle.

The protein localises to the cytoplasm. It localises to the nucleus. It is found in the mitochondrion outer membrane. In terms of biological role, binds DNA as a heterodimer with MLX and activates transcription. Binds to the canonical E box sequence 5'-CACGTG-3'. Plays a role in transcriptional activation of glycolytic target genes. Involved in glucose-responsive gene regulation. In Homo sapiens (Human), this protein is MLX-interacting protein.